The primary structure comprises 204 residues: Large ribosomal subunit protein bL25 (204 aa).

This sequence belongs to the bacterial ribosomal protein bL25 family. CTC subfamily. In terms of assembly, part of the 50S ribosomal subunit; part of the 5S rRNA/L5/L18/L25 subcomplex. Contacts the 5S rRNA. Binds to the 5S rRNA independently of L5 and L18.

Its function is as follows. This is one of the proteins that binds to the 5S RNA in the ribosome where it forms part of the central protuberance. The protein is Large ribosomal subunit protein bL25 of Rhizobium etli (strain ATCC 51251 / DSM 11541 / JCM 21823 / NBRC 15573 / CFN 42).